The chain runs to 294 residues: NAD kinase (294 aa).

The active-site Proton acceptor is D73. NAD(+) is bound by residues 73–74, 147–148, R175, D177, and 188–193; these read DG, ND, and TAYALS.

Belongs to the NAD kinase family. A divalent metal cation serves as cofactor.

It localises to the cytoplasm. It carries out the reaction NAD(+) + ATP = ADP + NADP(+) + H(+). In terms of biological role, involved in the regulation of the intracellular balance of NAD and NADP, and is a key enzyme in the biosynthesis of NADP. Catalyzes specifically the phosphorylation on 2'-hydroxyl of the adenosine moiety of NAD to yield NADP. This is NAD kinase from Nitrosospira multiformis (strain ATCC 25196 / NCIMB 11849 / C 71).